We begin with the raw amino-acid sequence, 532 residues long: Glucose-6-phosphate isomerase (532 aa).

Catalysis depends on glutamate 322, which acts as the Proton donor. Residues histidine 351 and lysine 457 contribute to the active site.

This sequence belongs to the GPI family.

The protein resides in the cytoplasm. The enzyme catalyses alpha-D-glucose 6-phosphate = beta-D-fructose 6-phosphate. The protein operates within carbohydrate biosynthesis; gluconeogenesis. Its pathway is carbohydrate degradation; glycolysis; D-glyceraldehyde 3-phosphate and glycerone phosphate from D-glucose: step 2/4. Its function is as follows. Catalyzes the reversible isomerization of glucose-6-phosphate to fructose-6-phosphate. In Synechococcus sp. (strain JA-2-3B'a(2-13)) (Cyanobacteria bacterium Yellowstone B-Prime), this protein is Glucose-6-phosphate isomerase.